The primary structure comprises 118 residues: Small ribosomal subunit protein uS13 (118 aa).

The segment at 91–118 (HRHSLPVRGQRTKTNARTRKGPRKPIRK) is disordered.

It belongs to the universal ribosomal protein uS13 family. In terms of assembly, part of the 30S ribosomal subunit. Forms a loose heterodimer with protein S19. Forms two bridges to the 50S subunit in the 70S ribosome.

Located at the top of the head of the 30S subunit, it contacts several helices of the 16S rRNA. In the 70S ribosome it contacts the 23S rRNA (bridge B1a) and protein L5 of the 50S subunit (bridge B1b), connecting the 2 subunits; these bridges are implicated in subunit movement. Contacts the tRNAs in the A and P-sites. The protein is Small ribosomal subunit protein uS13 of Hahella chejuensis (strain KCTC 2396).